A 211-amino-acid polypeptide reads, in one-letter code: Large ribosomal subunit protein eL13 (211 aa).

Belongs to the eukaryotic ribosomal protein eL13 family. As to quaternary structure, component of the 60S large ribosomal subunit (LSU).

The protein resides in the cytoplasm. Component of the ribosome, a large ribonucleoprotein complex responsible for the synthesis of proteins in the cell. The small ribosomal subunit (SSU) binds messenger RNAs (mRNAs) and translates the encoded message by selecting cognate aminoacyl-transfer RNA (tRNA) molecules. The large subunit (LSU) contains the ribosomal catalytic site termed the peptidyl transferase center (PTC), which catalyzes the formation of peptide bonds, thereby polymerizing the amino acids delivered by tRNAs into a polypeptide chain. The nascent polypeptides leave the ribosome through a tunnel in the LSU and interact with protein factors that function in enzymatic processing, targeting, and the membrane insertion of nascent chains at the exit of the ribosomal tunnel. As part of the LSU, it is probably required for its formation and the maturation of rRNAs. This Gallus gallus (Chicken) protein is Large ribosomal subunit protein eL13 (RPL13).